Reading from the N-terminus, the 4083-residue chain is Dynein heavy chain, cytoplasmic (4083 aa).

The segment at 1-1745 (MTDDQVAQAL…TIEQSCVSFC (1745 aa)) is stem. Coiled-coil stretches lie at residues 127 to 166 (DAVVSTNSNLEAKQESINSARRKIKDLSLSLQSLQQFIEV), 381 to 402 (INQWEALLKEFTSLIRELMRKR), and 801 to 821 (KLDLQNLEVLINKIQLLVDQA). 4 AAA regions span residues 1746 to 1967 (YGFE…VLRN), 2026 to 2265 (SYLA…YKAD), 2373 to 2622 (SLES…WVRG), and 2716 to 2980 (TFAE…GNSQ). ATP-binding positions include 1784–1791 (GPAGTGKT), 2064–2071 (GDAGTGKT), 2412–2419 (GPPGSGKT), and 2754–2761 (GPNYSGKT). Residues 2987 to 3294 (LTSLRRFQSL…RSIKLMESLT (308 aa)) form a stalk region. 3 coiled-coil regions span residues 3015–3085 (LEKL…NERR), 3223–3302 (LKEE…RWIK), and 3527–3607 (LEKE…VEDL). AAA regions lie at residues 3364 to 3592 (MVNP…EIAK) and 3748 to 3952 (LKSL…FLDH).

This sequence belongs to the dynein heavy chain family. In terms of assembly, consists of at least two heavy chains and a number of intermediate and light chains.

The protein localises to the cytoplasm. The protein resides in the cytoskeleton. Cytoplasmic dynein acts as a motor for the intracellular retrograde motility of vesicles and organelles along microtubules. Dynein has ATPase activity; the force-producing power stroke is thought to occur on release of ADP. Required to maintain uniform nuclear distribution in hyphae. May play an important role in the proper orientation of the mitotic spindle into the budding daughter cell yeast. Probably required for normal progression of the cell cycle. The polypeptide is Dynein heavy chain, cytoplasmic (DYN1) (Eremothecium gossypii (strain ATCC 10895 / CBS 109.51 / FGSC 9923 / NRRL Y-1056) (Yeast)).